Here is a 342-residue protein sequence, read N- to C-terminus: Aspartate carbamoyltransferase catalytic subunit (342 aa).

Residues Arg54 and Thr55 each coordinate carbamoyl phosphate. Residue Lys82 participates in L-aspartate binding. Carbamoyl phosphate contacts are provided by Arg104, His134, and Gln137. The L-aspartate site is built by Arg177 and Arg232. Carbamoyl phosphate is bound by residues Gly277 and Pro278.

This sequence belongs to the aspartate/ornithine carbamoyltransferase superfamily. ATCase family. As to quaternary structure, heterododecamer (2C3:3R2) of six catalytic PyrB chains organized as two trimers (C3), and six regulatory PyrI chains organized as three dimers (R2).

The enzyme catalyses carbamoyl phosphate + L-aspartate = N-carbamoyl-L-aspartate + phosphate + H(+). It functions in the pathway pyrimidine metabolism; UMP biosynthesis via de novo pathway; (S)-dihydroorotate from bicarbonate: step 2/3. Functionally, catalyzes the condensation of carbamoyl phosphate and aspartate to form carbamoyl aspartate and inorganic phosphate, the committed step in the de novo pyrimidine nucleotide biosynthesis pathway. This is Aspartate carbamoyltransferase catalytic subunit from Pseudarthrobacter chlorophenolicus (strain ATCC 700700 / DSM 12829 / CIP 107037 / JCM 12360 / KCTC 9906 / NCIMB 13794 / A6) (Arthrobacter chlorophenolicus).